The following is a 131-amino-acid chain: Small ribosomal subunit protein eS8 (131 aa).

Residues 1-38 are disordered; sequence MKLGAYYKGGDLKKPSGGKKRKVRRTKKKALGGGPPQI. Over residues 16 to 30 the composition is skewed to basic residues; the sequence is SGGKKRKVRRTKKKA.

The protein belongs to the eukaryotic ribosomal protein eS8 family. Part of the 30S ribosomal subunit.

This is Small ribosomal subunit protein eS8 from Pyrobaculum arsenaticum (strain DSM 13514 / JCM 11321 / PZ6).